Reading from the N-terminus, the 423-residue chain is ATP-dependent Clp protease ATP-binding subunit ClpX (423 aa).

One can recognise a ClpX-type ZB domain in the interval 1–50; that stretch reads MTDDTEYRCSFCGKEHHQVDDLIAGPDVRICSECVVLSCEIVEDRRNEAL. 4 residues coordinate Zn(2+): Cys-9, Cys-12, Cys-31, and Cys-34. 126–133 provides a ligand contact to ATP; that stretch reads PTGCGKTY.

Belongs to the ClpX chaperone family. As to quaternary structure, component of the ClpX-ClpP complex. Forms a hexameric ring that, in the presence of ATP, binds to fourteen ClpP subunits assembled into a disk-like structure with a central cavity, resembling the structure of eukaryotic proteasomes.

Functionally, ATP-dependent specificity component of the Clp protease. It directs the protease to specific substrates. Can perform chaperone functions in the absence of ClpP. This chain is ATP-dependent Clp protease ATP-binding subunit ClpX, found in Tropheryma whipplei (strain TW08/27) (Whipple's bacillus).